Consider the following 493-residue polypeptide: Cytochrome P450 710A3 (493 aa).

Residues 5–25 (VSLFASLTPYLVSALLLFLLL) form a helical membrane-spanning segment. Heme is bound at residue Cys-435.

The protein belongs to the cytochrome P450 family. Heme is required as a cofactor. In terms of tissue distribution, expressed in stems. Detected in primary root caps and immature petals.

It is found in the membrane. It carries out the reaction 5-dehydroepisterol + NADPH + O2 + H(+) = ergosta-5,7,22,24(28)-tetraen-3beta-ol + NADP(+) + 2 H2O. Its function is as follows. Required to form the C-22 double bond in the sterol side chain. Possesses in vitro C-22 desaturase activity toward beta-sitosterol and produces stigmasterol. The polypeptide is Cytochrome P450 710A3 (Arabidopsis thaliana (Mouse-ear cress)).